The sequence spans 332 residues: Cell growth regulator with RING finger domain protein 1 (332 aa).

An RING-type zinc finger spans residues 274–309 (CVVCQNGGVNWVLLPCRHACLCDSCVRYFKQCPMCR).

The protein localises to the nucleus. The protein resides in the endoplasmic reticulum. Its function is as follows. Able to inhibit growth in several cell lines. This Mus musculus (Mouse) protein is Cell growth regulator with RING finger domain protein 1 (Cgrrf1).